A 304-amino-acid polypeptide reads, in one-letter code: Acetyl-coenzyme A carboxylase carboxyl transferase subunit beta (304 aa).

The 270-residue stretch at 25–294 (LWIKCPETGE…KAVKRDTATE (270 aa)) folds into the CoA carboxyltransferase N-terminal domain.

The protein belongs to the AccD/PCCB family. As to quaternary structure, acetyl-CoA carboxylase is a heterohexamer composed of biotin carboxyl carrier protein (AccB), biotin carboxylase (AccC) and two subunits each of ACCase subunit alpha (AccA) and ACCase subunit beta (AccD).

The protein localises to the cytoplasm. The catalysed reaction is N(6)-carboxybiotinyl-L-lysyl-[protein] + acetyl-CoA = N(6)-biotinyl-L-lysyl-[protein] + malonyl-CoA. The protein operates within lipid metabolism; malonyl-CoA biosynthesis; malonyl-CoA from acetyl-CoA: step 1/1. Its function is as follows. Component of the acetyl coenzyme A carboxylase (ACC) complex. Biotin carboxylase (BC) catalyzes the carboxylation of biotin on its carrier protein (BCCP) and then the CO(2) group is transferred by the transcarboxylase to acetyl-CoA to form malonyl-CoA. The chain is Acetyl-coenzyme A carboxylase carboxyl transferase subunit beta from Rhizobium meliloti (strain 1021) (Ensifer meliloti).